We begin with the raw amino-acid sequence, 1506 residues long: Phosphatidylinositol 3-kinase C2 domain-containing subunit gamma (1506 aa).

A disordered region spans residues 1–34; it reads MAYSWQTEPNRTEPQEDGSDTQQFHHTNQHLSSR. Residues 20–34 are compositionally biased toward polar residues; sequence DTQQFHHTNQHLSSR. A PI3K-RBD domain is found at 285–371; the sequence is DTKFRVKISI…IQLHLQKNRD (87 aa). The C2 PI3K-type domain maps to 541 to 689; it reads LQSHLSFTVC…SPLTLQIDFP (149 aa). The PIK helical domain occupies 704–880; the sequence is RTDHEEPPRE…QELLAALQFC (177 aa). The PI3K/PI4K catalytic domain occupies 949 to 1227; that stretch reads DRDACSYFTS…KIKESLECFP (279 aa). The tract at residues 955 to 961 is G-loop; it reads YFTSNAS. The tract at residues 1091–1099 is catalytic loop; the sequence is GVCDRHNDN. The segment at 1110–1136 is activation loop; sequence HIDFGKFLGHAQTFGGIKRDRAPFIFT. A PX domain is found at 1260-1372; it reads LNKTRTIQRV…SFFLSEHIQP (113 aa). Residues 1381–1506 form the C2 domain; it reads DPGENSLDKS…KWYPLGNSII (126 aa).

The protein belongs to the PI3/PI4-kinase family. As to expression, expressed predominantly in liver. Also found in kidney, lung and lymphoid tissue. Down-regulated in BeF3 cells expressing the BCR-ABL oncogene p185.

It is found in the membrane. It carries out the reaction a 1,2-diacyl-sn-glycero-3-phospho-(1D-myo-inositol 4-phosphate) + ATP = a 1,2-diacyl-sn-glycero-3-phospho-(1D-myo-inositol-3,4-bisphosphate) + ADP + H(+). The catalysed reaction is a 1,2-diacyl-sn-glycero-3-phospho-(1D-myo-inositol) + ATP = a 1,2-diacyl-sn-glycero-3-phospho-(1D-myo-inositol-3-phosphate) + ADP + H(+). Functionally, generates phosphatidylinositol 3-phosphate (PtdIns3P) and phosphatidylinositol 3,4-bisphosphate (PtdIns(3,4)P2) that act as second messengers. May play a role in SDF1A-stimulated chemotaxis. This Mus musculus (Mouse) protein is Phosphatidylinositol 3-kinase C2 domain-containing subunit gamma (Pik3c2g).